The following is a 214-amino-acid chain: Probable transaldolase (214 aa).

Lys83 serves as the catalytic Schiff-base intermediate with substrate.

It belongs to the transaldolase family. Type 3B subfamily.

Its subcellular location is the cytoplasm. The catalysed reaction is D-sedoheptulose 7-phosphate + D-glyceraldehyde 3-phosphate = D-erythrose 4-phosphate + beta-D-fructose 6-phosphate. It functions in the pathway carbohydrate degradation; pentose phosphate pathway; D-glyceraldehyde 3-phosphate and beta-D-fructose 6-phosphate from D-ribose 5-phosphate and D-xylulose 5-phosphate (non-oxidative stage): step 2/3. Transaldolase is important for the balance of metabolites in the pentose-phosphate pathway. The sequence is that of Probable transaldolase from Streptococcus pyogenes serotype M2 (strain MGAS10270).